A 402-amino-acid polypeptide reads, in one-letter code: Phosphoglycerate kinase (402 aa).

Substrate-binding positions include Asp-21–Asn-23, Arg-36, His-59–Arg-62, Arg-118, and Arg-151. Residues Lys-201, Gly-293, Glu-324, and Gly-353–Ser-356 contribute to the ATP site.

Belongs to the phosphoglycerate kinase family. In terms of assembly, monomer.

The protein resides in the cytoplasm. It catalyses the reaction (2R)-3-phosphoglycerate + ATP = (2R)-3-phospho-glyceroyl phosphate + ADP. It participates in carbohydrate degradation; glycolysis; pyruvate from D-glyceraldehyde 3-phosphate: step 2/5. The polypeptide is Phosphoglycerate kinase (Thermosipho africanus (strain TCF52B)).